A 1866-amino-acid chain; its full sequence is MQWKKKFTRLKAATGNSRVRRMLCCGRRKENGRSVPDVTASPGRAPPGPLPANQMPAMGNQQHHGNQQHHGNQQQHHGNQHSNHRGQSGSLSNAAGVKDPVMLQGDFRKVSGISSEIFRQIEAVENDHDPNTAAALEAVERRGEMIVRVLEPRCMGSKQAVDAAHKLMNKADARHTVQLVEIVKRPGQTLGLYIREGNGADRTDGVFISRIALESAVYNSGCLRVGDEILAVNLVDVTHMSLDDVVIIMSIPRRLVLAIRQRRGNRGTGSPGPPTLSRPEQKPPPVVVIKRDLRDEDLDETDRMPRPRSSRDRRTGDGREMTESRSRLGLGLNNYSPQSEQLDMYYNTRGGGGGAMGEPPNWGYKPPPPPSSVITEQPTKAHAFAPSHAYYQNAGTLESLAEKVHAFYPGQPGGPPVGPSRRMSTGTGNVGLAQQHARFPRSGSDQHLPRVEYSDYSNSLGRHSLLRSSLKPGTTGGAPMQVGVGGTLGRYGRYDQQRAGVSKYGPPSGGAQSLTRRSRPNLDYSSDTEATIGPRPSYYYYNRPAIGSMSRGSGGAGGGVGAASTAALLAGAADLNKFNSLPRERPGTRLQGIRSRMGDRLVDENDGNTSAPEFDVRRGRDLRQRITASPSIFTADEYRAWLRRAPSSSAIAEQMRMTRDMFAQPRAQRFSCSAENIHDALRNTESIYSSRNHILGTGTLDRNMGLTRPISALPVRSMSSQHIGGAGSIRSPSIRRMRQLLELSAGPASPSGSILSTGGHQSPAPTPSATLPRPHRQIDINPAEFAKYKLDKPIVDIGGISGMLWIHLLAGRGLRTAPEGAAGTATQGQTRDLYCVIECDRVHKARTVVRSGDLQFDWDESFELDLVGNKQLDVLVYSWDPQHRHKLCYRGAISLSSILRQSPLHQLALKVEPRGTIYIRMRHTDPLALYKRRGLPSLRAGYPTLFGADLETVVNRESKNAPGSAPVPIVLRRCVEEVERRGLDIIGLYRLCGSATKKRLLREAFERNSRAVELTPEHVPDINVITGVLKDYLRELPEPLFTRCLFQMTVDALAVCLPDDPEGNAKLMLSILDCLPRANRATLVFLLDHLSLVVSNSERNKMSAQALATVMGPPLMLHSASAQPGADIDHAQPIAVLKYLLQIWPQPQAQHQQMAQHMGGAAGAMMGGLVTAGSMSNMAGVASGRRGESTGQRGSKVSALPADRQQLLLQQQAQLMAAGNLLRSSTSVTNILSQGHPQLSATANNHLYQSVVGQLAQSHRALQQAVQQPYQLGGSVGSAIPDPSPLPLPGTPSPGSSSASTGSGSGSGKSTDTIKRGASPVSVKQVKIVDQPSSPYSIVMKKPPLQKDAPVEITTPTTQADTESTLGCKESNGTASRRGNVDFYDTHKTQAKSVVNEESSYSSKYTGSETKKIIPGNSSYTPSKANASGLSGGEDYKAMRNKSSATSSSSSSQATVLSAGSTATSAPTTSSDDSDDLVSYKSSASTNALLAQSQAMTTSQLMSKYLKREPRVQFTPIKSPESPSPPGSGDGLPKGTYQLVTPISGSSSKPGATTGAISKYTTGSVESSINANSQKLSSPSRLCNSKDSNSRTGTASSTTPATSMVSTGRRLFDSLASSSSSETETKTYIGGTTAASGAITTTIYTNDTKNSGSSSSKSGIGGGSGTGLGAVSGASSETRSFGSTLFGSSGLGNGNGSSHNHSSASPSPFTTTNGNGNHNTMHLYGTLPKNGTSTGAALFGGSANSSSYHSSASGSGAGTASSSGVSSMTGSTNSYDFYTSTSSTVSSSRPFANGGNNYHTLGTYRAQYAATNPFLDAFDEKPGSNGGNAHGEEKLGADKGHHRAAVMAFQSSGDSKNGSDEYDDIK.

3 disordered regions span residues 22–98 (MLCC…AGVK), 262–336 (RRGN…NNYS), and 466–530 (LRSS…DTEA). The segment covering 59-77 (GNQQHHGNQQHHGNQQQHH) has biased composition (low complexity). The 86-residue stretch at 179–264 (LVEIVKRPGQ…LVLAIRQRRG (86 aa)) folds into the PDZ domain. The span at 271-286 (PGPPTLSRPEQKPPPV) shows a compositional bias: pro residues. A compositionally biased stretch (basic and acidic residues) spans 301 to 326 (TDRMPRPRSSRDRRTGDGREMTESRS). Ser-719 carries the phosphoserine modification. The tract at residues 745–775 (AGPASPSGSILSTGGHQSPAPTPSATLPRPH) is disordered. The span at 750-760 (PSGSILSTGGH) shows a compositional bias: polar residues. The region spanning 789–908 (KLDKPIVDIG…LRQSPLHQLA (120 aa)) is the C2 domain. A Rho-GAP domain is found at 948–1148 (ADLETVVNRE…YLLQIWPQPQ (201 aa)). Disordered regions lie at residues 1273–1328 (GGSV…QVKI), 1356–1380 (PTTQ…RRGN), 1393–1479 (SVVN…DLVS), 1514–1607 (FTPI…MVST), 1644–1727 (YTND…YGTL), and 1819–1840 (DEKP…ADKG). The span at 1282-1292 (DPSPLPLPGTP) shows a compositional bias: pro residues. Residues 1293 to 1302 (SPGSSSASTG) show a composition bias toward low complexity. 3 stretches are compositionally biased toward polar residues: residues 1356-1377 (PTTQ…TASR), 1393-1408 (SVVN…YTGS), and 1416-1429 (GNSS…NASG). Over residues 1443–1479 (SSATSSSSSSQATVLSAGSTATSAPTTSSDDSDDLVS) the composition is skewed to low complexity. Over residues 1538–1587 (QLVTPISGSSSKPGATTGAISKYTTGSVESSINANSQKLSSPSRLCNSKD) the composition is skewed to polar residues. Low complexity-rich tracts occupy residues 1590 to 1607 (SRTG…MVST) and 1644 to 1658 (YTND…SSKS). Residues 1659 to 1670 (GIGGGSGTGLGA) show a composition bias toward gly residues. Low complexity-rich tracts occupy residues 1671 to 1688 (VSGA…LFGS) and 1696 to 1720 (GSSH…NHNT). Residues 1830–1839 (HGEEKLGADK) are compositionally biased toward basic and acidic residues.

As to quaternary structure, interacts (via PDZ domain) with Nrx-1; may recruit Nrx-1 to the presynaptic active zone.

It localises to the presynapse. GTPase activator for the Rho-type GTPases by converting them to an inactive GDP-bound state. Promotes the anchoring of Liprin-alpha clusters at synapses. Recruits and keeps Nrx-1 levels high in active zones in the presynapse opposite the postsynaptic region. The sequence is that of Rho GTPase-activating protein 100F (RhoGAP100F) from Drosophila melanogaster (Fruit fly).